The primary structure comprises 954 residues: Glycine dehydrogenase (decarboxylating) (954 aa).

Lysine 704 is modified (N6-(pyridoxal phosphate)lysine).

It belongs to the GcvP family. The glycine cleavage system is composed of four proteins: P, T, L and H. Pyridoxal 5'-phosphate serves as cofactor.

The enzyme catalyses N(6)-[(R)-lipoyl]-L-lysyl-[glycine-cleavage complex H protein] + glycine + H(+) = N(6)-[(R)-S(8)-aminomethyldihydrolipoyl]-L-lysyl-[glycine-cleavage complex H protein] + CO2. Its function is as follows. The glycine cleavage system catalyzes the degradation of glycine. The P protein binds the alpha-amino group of glycine through its pyridoxal phosphate cofactor; CO(2) is released and the remaining methylamine moiety is then transferred to the lipoamide cofactor of the H protein. This Vibrio vulnificus (strain CMCP6) protein is Glycine dehydrogenase (decarboxylating).